The chain runs to 325 residues: GMP reductase (325 aa).

Residue Cys173 is the Thioimidate intermediate of the active site. NADP(+) is bound at residue 202–225; it reads IIADGGIRDHGDIAKSVRFGASMV.

The protein belongs to the IMPDH/GMPR family. GuaC type 2 subfamily.

It catalyses the reaction IMP + NH4(+) + NADP(+) = GMP + NADPH + 2 H(+). Its function is as follows. Catalyzes the irreversible NADPH-dependent deamination of GMP to IMP. It functions in the conversion of nucleobase, nucleoside and nucleotide derivatives of G to A nucleotides, and in maintaining the intracellular balance of A and G nucleotides. The sequence is that of GMP reductase from Variovorax paradoxus (strain S110).